Here is a 197-residue protein sequence, read N- to C-terminus: Adrenodoxin-like protein 2, mitochondrial (197 aa).

A mitochondrion-targeting transit peptide spans 1–74 (MVFHRLSRLG…TSFSTTSEKG (74 aa)). In terms of domain architecture, 2Fe-2S ferredoxin-type spans 81–184 (INVTFVDKDG…GVRLAIPSAT (104 aa)). [2Fe-2S] cluster contacts are provided by Cys118, Cys124, Cys127, and Cys165.

This sequence belongs to the adrenodoxin/putidaredoxin family. [2Fe-2S] cluster is required as a cofactor.

It is found in the mitochondrion. In terms of biological role, associates with the adrenodoxin reductase MFDR to form an efficient low potential electron transfer chain that is able to reduce cytochrome C. The polypeptide is Adrenodoxin-like protein 2, mitochondrial (Arabidopsis thaliana (Mouse-ear cress)).